Reading from the N-terminus, the 263-residue chain is R-spondin-1 (263 aa).

The first 20 residues, 1–20 (MRLGLCVVALVLSWTHLTIS), serve as a signal peptide directing secretion. FU repeat units lie at residues 34–85 (AEGS…GYFD) and 91–135 (MNKC…GSSA). Intrachain disulfides connect cysteine 40-cysteine 47, cysteine 44-cysteine 53, cysteine 56-cysteine 75, cysteine 79-cysteine 94, cysteine 97-cysteine 105, cysteine 102-cysteine 111, cysteine 114-cysteine 125, cysteine 129-cysteine 142, cysteine 148-cysteine 190, cysteine 159-cysteine 166, and cysteine 199-cysteine 206. Asparagine 137 is a glycosylation site (N-linked (GlcNAc...) asparagine). The TSP type-1 domain occupies 147–207 (QCEMSEWSPW…RCTVRRVPCP (61 aa)). Residues tryptophan 153 and tryptophan 156 are each glycosylated (C-linked (Man) tryptophan). The tract at residues 206–263 (CPEGQKRRKGGQGRRENANRNLARKESKEAGAGSRRRKGQQQQQQQGTVGPLTSAGPA) is disordered. Positions 218–234 (GRRENANRNLARKESKE) are enriched in basic and acidic residues.

Belongs to the R-spondin family. In terms of assembly, interacts with the extracellular domain of FZD8 and LRP6. It however does not form a ternary complex with FZD8 and LRP6. Interacts with WNT1. Binds heparin. Interacts with ZNRF3; promoting indirect interaction between ZNRF3 and LGR4 and membrane clearance of ZNRF3. Interacts with LGR4, LGR5 and LGR6. Identified in a complex composed of RNF43, LGR5 and RSPO1. Interacts (via FU repeats) with KREM1. In terms of processing, C-, and N-glycosylated. N-glycosylation at Asn-137, negatively influences its secretion and enhancing effect on Wnt/beta-catenin signaling. C-mannosylation at Trp-156 by DPY19L3 is required for its secretion and regulates the enhancing activity of Wnt signaling. As to expression, abundantly expressed in adrenal glands, ovary, testis, thyroid and trachea but not in bone marrow, spinal cord, stomach, leukocytes colon, small intestine, prostate, thymus and spleen.

Its subcellular location is the secreted. It localises to the nucleus. In terms of biological role, activator of the canonical Wnt signaling pathway by acting as a ligand for LGR4-6 receptors. Upon binding to LGR4-6 (LGR4, LGR5 or LGR6), LGR4-6 associate with phosphorylated LRP6 and frizzled receptors that are activated by extracellular Wnt receptors, triggering the canonical Wnt signaling pathway to increase expression of target genes. Also regulates the canonical Wnt/beta-catenin-dependent pathway and non-canonical Wnt signaling by acting as an inhibitor of ZNRF3, an important regulator of the Wnt signaling pathway. Acts as a ligand for frizzled FZD8 and LRP6. May negatively regulate the TGF-beta pathway. Has a essential roles in ovary determination. Regulates Wnt signaling by antagonizing DKK1/KREM1-mediated internalization of LRP6 through an interaction with KREM1. This is R-spondin-1 (RSPO1) from Homo sapiens (Human).